Here is a 290-residue protein sequence, read N- to C-terminus: Transcription cofactor vestigial-like protein 4 (290 aa).

The residue at position 1 (M1) is an N-acetylmethionine. The span at 17 to 30 (ADDEKREAALRGEP) shows a compositional bias: basic and acidic residues. Disordered stretches follow at residues 17 to 65 (ADDE…PGDE), 85 to 106 (LNKT…SPIE), 140 to 161 (LDAS…QQNR), and 254 to 290 (AAKD…SVVS). S52 carries the post-translational modification Phosphoserine. Residues 92-105 (DCRRDPRERSRSPI) are compositionally biased toward basic and acidic residues. At S149 the chain carries Phosphoserine. Over residues 150–161 (PTLTPGERQQNR) the composition is skewed to polar residues. A Phosphothreonine modification is found at T153. A compositionally biased stretch (low complexity) spans 272–290 (PASPSAHMVSHSHSPSVVS). S274 bears the Phosphoserine mark.

Belongs to the vestigial family. As to quaternary structure, interacts with TEFs. Interacts with IRF2BP2.

The protein resides in the nucleus. May act as a specific coactivator for the mammalian TEFs. This chain is Transcription cofactor vestigial-like protein 4, found in Homo sapiens (Human).